The sequence spans 102 residues: Flagellar hook-basal body complex protein FliE (102 aa).

This sequence belongs to the FliE family.

The protein localises to the bacterial flagellum basal body. In Halalkalibacterium halodurans (strain ATCC BAA-125 / DSM 18197 / FERM 7344 / JCM 9153 / C-125) (Bacillus halodurans), this protein is Flagellar hook-basal body complex protein FliE.